The primary structure comprises 1370 residues: DNA-directed RNA polymerase subunit beta (1370 aa).

Belongs to the RNA polymerase beta chain family. The RNAP catalytic core consists of 2 alpha, 1 beta, 1 beta' and 1 omega subunit. When a sigma factor is associated with the core the holoenzyme is formed, which can initiate transcription.

It carries out the reaction RNA(n) + a ribonucleoside 5'-triphosphate = RNA(n+1) + diphosphate. Its function is as follows. DNA-dependent RNA polymerase catalyzes the transcription of DNA into RNA using the four ribonucleoside triphosphates as substrates. The polypeptide is DNA-directed RNA polymerase subunit beta (Bordetella parapertussis (strain 12822 / ATCC BAA-587 / NCTC 13253)).